Consider the following 424-residue polypeptide: Enolase (424 aa).

Glutamine 164 provides a ligand contact to (2R)-2-phosphoglycerate. The Proton donor role is filled by glutamate 206. Aspartate 243, glutamate 284, and aspartate 311 together coordinate Mg(2+). (2R)-2-phosphoglycerate contacts are provided by lysine 336, arginine 365, serine 366, and lysine 387. Lysine 336 functions as the Proton acceptor in the catalytic mechanism.

This sequence belongs to the enolase family. The cofactor is Mg(2+).

The protein localises to the cytoplasm. It is found in the secreted. The protein resides in the cell surface. It catalyses the reaction (2R)-2-phosphoglycerate = phosphoenolpyruvate + H2O. The protein operates within carbohydrate degradation; glycolysis; pyruvate from D-glyceraldehyde 3-phosphate: step 4/5. Its function is as follows. Catalyzes the reversible conversion of 2-phosphoglycerate (2-PG) into phosphoenolpyruvate (PEP). It is essential for the degradation of carbohydrates via glycolysis. The chain is Enolase from Wolbachia sp. subsp. Drosophila simulans (strain wRi).